Reading from the N-terminus, the 246-residue chain is DNA repair protein RecO (246 aa).

The protein belongs to the RecO family.

Functionally, involved in DNA repair and RecF pathway recombination. The polypeptide is DNA repair protein RecO (Methylorubrum populi (strain ATCC BAA-705 / NCIMB 13946 / BJ001) (Methylobacterium populi)).